The chain runs to 730 residues: Pheromone-processing carboxypeptidase KEX1 (730 aa).

Positions 1 to 19 (MLHATVLPILLWLATLAYG) are cleaved as a signal peptide. The Lumenal portion of the chain corresponds to 20-599 (FDRKEFLVDG…DEDEEGSNFK (580 aa)). Residue asparagine 60 is glycosylated (N-linked (GlcNAc...) asparagine). Catalysis depends on residues serine 181, aspartate 376, and histidine 441. The disordered stretch occupies residues 475-590 (SSKDGDIDGY…LETGGEYYQD (116 aa)). Residues 486-497 (EDDKSQDENKDN) are compositionally biased toward basic and acidic residues. Asparagine 497 and asparagine 507 each carry an N-linked (GlcNAc...) asparagine glycan. Acidic residues predominate over residues 498 to 514 (ESEDESEDENDSDDESD). Over residues 515 to 526 (GKEGDKQENKPD) the composition is skewed to basic and acidic residues. Acidic residues-rich tracts occupy residues 527 to 557 (DSDD…DGDD) and 579 to 590 (NDLETGGEYYQD). The chain crosses the membrane as a helical span at residues 600–620 (AFFLILSLVSAFIIVAAFYIS). Residues 621–730 (DYIKSRRHPI…DIELQDIERH (110 aa)) lie on the Cytoplasmic side of the membrane. The disordered stretch occupies residues 684 to 730 (EDEEQLEGVVPESTRKSKKGSKKKGKYFSVPNDDSAEDIELQDIERH). Residues 699-709 (KSKKGSKKKGK) show a composition bias toward basic residues. A compositionally biased stretch (acidic residues) spans 717-730 (DSAEDIELQDIERH).

It belongs to the peptidase S10 family.

The protein resides in the golgi apparatus. It localises to the trans-Golgi network membrane. The catalysed reaction is Preferential release of a C-terminal arginine or lysine residue.. Its function is as follows. Protease with a carboxypeptidase B-like function involved in the C-terminal processing of the lysine and arginine residues from protein precursors. Promotes cell fusion and is involved in the programmed cell death. This chain is Pheromone-processing carboxypeptidase KEX1 (KEX1), found in Candida glabrata (strain ATCC 2001 / BCRC 20586 / JCM 3761 / NBRC 0622 / NRRL Y-65 / CBS 138) (Yeast).